Here is a 24-residue protein sequence, read N- to C-terminus: Xenoposin precursor fragment B2 (24 aa).

As to expression, expressed by the skin glands.

It is found in the secreted. Has antimicrobial activity against Gram-negative bacterium E.coli ATCC 25922 (MIC=100 uM), Gram-positive bacterium S.auerus ATCC 25923 (MIC=25 uM). This Xenopus borealis (Kenyan clawed frog) protein is Xenoposin precursor fragment B2.